Here is a 121-residue protein sequence, read N- to C-terminus: Small ribosomal subunit protein bS6m (121 aa).

This sequence belongs to the bacterial ribosomal protein bS6 family. As to quaternary structure, component of the mitochondrial ribosome small subunit (28S) which comprises a 12S rRNA and about 30 distinct proteins.

It localises to the mitochondrion. The chain is Small ribosomal subunit protein bS6m (MRPS6) from Gallus gallus (Chicken).